A 445-amino-acid polypeptide reads, in one-letter code: UPF0210 protein SZO_15840 (445 aa).

The protein belongs to the UPF0210 family. Homodimer.

The polypeptide is UPF0210 protein SZO_15840 (Streptococcus equi subsp. zooepidemicus (strain H70)).